The sequence spans 304 residues: Rhodopsin (304 aa).

Over 1-13 (YEYPQYYLVNPAA) the chain is Extracellular. A helical transmembrane segment spans residues 14–38 (YAALGAYMFLLILVGFPINFLTLYV). Residues 39 to 50 (TIEHKKLRTPLN) lie on the Cytoplasmic side of the membrane. A helical membrane pass occupies residues 51-73 (YILLNLAVANLFMVFGGFTTTMF). Topologically, residues 74-87 (TSIRGYFVLGHLGC) are extracellular. Cys-87 and Cys-164 form a disulfide bridge. The helical transmembrane segment at 88-110 (NLEGFFATLSGEIALWSLVVLAI) threads the bilayer. The short motif at 111-113 (ERW) is the 'Ionic lock' involved in activated form stabilization element. Residues 111 to 129 (ERWVVVCKPISNFRFGENH) are Cytoplasmic-facing. The chain crosses the membrane as a helical span at residues 130 to 150 (AIMGLAFTWTMAMACAAPPLV). The Extracellular segment spans residues 151–179 (GWSRYIPEGMQCSCGIDYYTRAEGFNNES). The N-linked (GlcNAc...) asparagine glycan is linked to Asn-177. A helical transmembrane segment spans residues 180 to 201 (FVVYMFTCHFMTPLTIVFFCYG). At 202–229 (RLLCAVKEAAAAQQESETTQRAEREVTR) the chain is on the cytoplasmic side. The chain crosses the membrane as a helical span at residues 230–251 (MVVIMVIAFLICWCPYAGVAWF). Over 252-263 (IFTHQGSEFGPV) the chain is Extracellular. A helical transmembrane segment spans residues 264–285 (FMTIPAFFAKSSSIYNPMIYIC). The residue at position 273 (Lys-273) is an N6-(retinylidene)lysine. Residues 286–304 (LNKQFRHCMITTLCCGKKA) are Cytoplasmic-facing. Residues Cys-299 and Cys-300 are each lipidated (S-palmitoyl cysteine).

Belongs to the G-protein coupled receptor 1 family. Opsin subfamily. In terms of processing, phosphorylated on some or all of the serine and threonine residues present in the C-terminal region. Post-translationally, contains one covalently linked retinal chromophore.

It localises to the membrane. It is found in the cell projection. Its subcellular location is the cilium. The protein resides in the photoreceptor outer segment. Functionally, photoreceptor required for image-forming vision at low light intensity. While most salt water fish species use retinal as chromophore, most freshwater fish use 3-dehydroretinal, or a mixture of retinal and 3-dehydroretinal. Light-induced isomerization of 11-cis to all-trans retinal triggers a conformational change that activates signaling via G-proteins. Subsequent receptor phosphorylation mediates displacement of the bound G-protein alpha subunit by arrestin and terminates signaling. The chain is Rhodopsin (rho) from Ictalurus punctatus (Channel catfish).